The primary structure comprises 61 residues: Large ribosomal subunit protein uL30 (61 aa).

Belongs to the universal ribosomal protein uL30 family. In terms of assembly, part of the 50S ribosomal subunit.

In Francisella philomiragia subsp. philomiragia (strain ATCC 25017 / CCUG 19701 / FSC 153 / O#319-036), this protein is Large ribosomal subunit protein uL30.